The following is a 105-amino-acid chain: Serine protease inhibitor Kazal-type 8 (105 aa).

An N-terminal signal peptide occupies residues methionine 1–alanine 21. 3 disulfides stabilise this stretch: cysteine 44/cysteine 78, cysteine 51/cysteine 75, and cysteine 64/cysteine 96. Residues cysteine 44–histidine 98 enclose the Kazal-like domain.

As to expression, expressed in epydiymis, in the cauda, corpus and caput.

The protein localises to the secreted. Its function is as follows. Probable serine protease inhibitor. The sequence is that of Serine protease inhibitor Kazal-type 8 (Spink8) from Mus musculus (Mouse).